A 66-amino-acid polypeptide reads, in one-letter code: Large ribosomal subunit protein bL33c (66 aa).

Belongs to the bacterial ribosomal protein bL33 family.

It is found in the plastid. The protein localises to the chloroplast. This Carica papaya (Papaya) protein is Large ribosomal subunit protein bL33c.